Here is a 553-residue protein sequence, read N- to C-terminus: Thermosome subunit beta (553 aa).

The disordered stretch occupies residues 534–553 (KKSEGKTGEKKESEKGKEED).

This sequence belongs to the TCP-1 chaperonin family. Forms a Heterooligomeric complex of two stacked eight-membered rings.

Molecular chaperone; binds unfolded polypeptides in vitro, and has a weak ATPase activity. The protein is Thermosome subunit beta (thsB) of Sulfolobus acidocaldarius (strain ATCC 33909 / DSM 639 / JCM 8929 / NBRC 15157 / NCIMB 11770).